A 554-amino-acid chain; its full sequence is Rab GTPase-binding effector protein 2 (554 aa).

A compositionally biased stretch (low complexity) spans 1 to 15; the sequence is MAAAPAALALDPQPQ. 3 disordered regions span residues 1–29, 167–250, and 375–395; these read MAAA…ELSR, IQRR…ETAS, and EQLP…DEAL. Residues 15–173 are a coiled coil; that stretch reads QEEQKDASES…IQEIQRRPRQ (159 aa). Positions 16–29 are enriched in basic and acidic residues; that stretch reads EEQKDASESSELSR. Phosphoserine is present on residues serine 176, serine 180, serine 187, and serine 191. Residues 274-512 are a coiled coil; the sequence is DSQWEQLQVE…LETSEQVQRD (239 aa). Residues 377–386 are compositionally biased toward polar residues; it reads LPSSALQGSE.

It belongs to the rabaptin family. Heterodimer with RABGEF1. The dimer binds RAB5A that has been activated by GTP-binding. Interacts with SDCCAG8; this interaction is important for ciliogenesis regulation. Interacts with RAB4A; this interaction may mediate VEGFR2 cell surface expression.

The protein resides in the cytoplasm. It is found in the early endosome. It localises to the cytoskeleton. Its subcellular location is the microtubule organizing center. The protein localises to the centrosome. The protein resides in the cilium basal body. Its function is as follows. Plays a role in membrane trafficking and in homotypic early endosome fusion. Participates in arteriogenesis by regulating vascular endothelial growth factor receptor 2/VEGFR2 cell surface expression and endosomal trafficking. By interacting with SDCCAG8, localizes to centrosomes and plays a critical role in ciliogenesis. In Rattus norvegicus (Rat), this protein is Rab GTPase-binding effector protein 2 (Rabep2).